The primary structure comprises 103 residues: Acyl carrier protein (103 aa).

The Carrier domain occupies 14-89 (NIVSNIVQDI…EFIDFTLQTI (76 aa)). O-(pantetheine 4'-phosphoryl)serine is present on Ser49.

It belongs to the acyl carrier protein (ACP) family. In terms of processing, 4'-phosphopantetheine is transferred from CoA to a specific serine of apo-ACP by AcpS. This modification is essential for activity because fatty acids are bound in thioester linkage to the sulfhydryl of the prosthetic group.

It localises to the plastid. It is found in the cyanelle. It participates in lipid metabolism; fatty acid biosynthesis. Its function is as follows. Carrier of the growing fatty acid chain in fatty acid biosynthesis. The polypeptide is Acyl carrier protein (Cyanophora paradoxa).